The primary structure comprises 202 residues: uncharacterized protein (202 aa).

It belongs to the dienelactone hydrolase family.

This is an uncharacterized protein from Bacillus subtilis (strain 168).